Consider the following 318-residue polypeptide: L-lactate dehydrogenase (318 aa).

Residues V18, D39, K44, Y69, and 83 to 84 each bind NAD(+); that span reads GA. Q86 and R92 together coordinate substrate. NAD(+) contacts are provided by residues S105, 122–124, and S147; that span reads VSN. Substrate is bound at residue 124–127; it reads NPVD. 152-155 contributes to the substrate binding site; the sequence is DTSR. H179 functions as the Proton acceptor in the catalytic mechanism. Y225 carries the phosphotyrosine modification. T234 contributes to the substrate binding site.

It belongs to the LDH/MDH superfamily. LDH family. Homotetramer.

It localises to the cytoplasm. The catalysed reaction is (S)-lactate + NAD(+) = pyruvate + NADH + H(+). Its pathway is fermentation; pyruvate fermentation to lactate; (S)-lactate from pyruvate: step 1/1. Catalyzes the conversion of lactate to pyruvate. The protein is L-lactate dehydrogenase of Clostridium botulinum (strain Okra / Type B1).